We begin with the raw amino-acid sequence, 130 residues long: Interferon alpha-inducible protein 27-like protein 2 (130 aa).

The next 3 helical transmembrane spans lie at 8–28 (AAVG…AMGF), 43–63 (MSAA…VATL), and 66–86 (VGAA…GSVL). Residues 93–130 (SPSSSLPAEPEAKEDEARENVPQGEPPKPPLKSEKHEE) form a disordered region.

Belongs to the IFI6/IFI27 family.

It localises to the mitochondrion membrane. Functionally, plays a role in the apoptotic process and has a pro-apoptotic activity. The protein is Interferon alpha-inducible protein 27-like protein 2 of Homo sapiens (Human).